A 270-amino-acid chain; its full sequence is Thiazole synthase (270 aa).

Lys112 acts as the Schiff-base intermediate with DXP in catalysis. Residues Gly173, 199–200, and 221–222 contribute to the 1-deoxy-D-xylulose 5-phosphate site; these read AG and NS.

The protein belongs to the ThiG family. As to quaternary structure, homotetramer. Forms heterodimers with either ThiH or ThiS.

The protein localises to the cytoplasm. It catalyses the reaction [ThiS sulfur-carrier protein]-C-terminal-Gly-aminoethanethioate + 2-iminoacetate + 1-deoxy-D-xylulose 5-phosphate = [ThiS sulfur-carrier protein]-C-terminal Gly-Gly + 2-[(2R,5Z)-2-carboxy-4-methylthiazol-5(2H)-ylidene]ethyl phosphate + 2 H2O + H(+). Its pathway is cofactor biosynthesis; thiamine diphosphate biosynthesis. Its function is as follows. Catalyzes the rearrangement of 1-deoxy-D-xylulose 5-phosphate (DXP) to produce the thiazole phosphate moiety of thiamine. Sulfur is provided by the thiocarboxylate moiety of the carrier protein ThiS. In vitro, sulfur can be provided by H(2)S. This is Thiazole synthase from Pseudomonas entomophila (strain L48).